The chain runs to 286 residues: Glycine--tRNA ligase alpha subunit (286 aa).

This sequence belongs to the class-II aminoacyl-tRNA synthetase family. As to quaternary structure, tetramer of two alpha and two beta subunits.

The protein resides in the cytoplasm. It carries out the reaction tRNA(Gly) + glycine + ATP = glycyl-tRNA(Gly) + AMP + diphosphate. In Thermotoga sp. (strain RQ2), this protein is Glycine--tRNA ligase alpha subunit.